Here is a 1839-residue protein sequence, read N- to C-terminus: Adenylate cyclase (1839 aa).

Disordered regions lie at residues 1-21 (MSSP…PQIE), 43-87 (ITTH…PRFS), 126-245 (TSLL…PIVS), 272-315 (KNTE…QWTA), 332-388 (KRKA…DSND), and 400-468 (ESSG…SFSK). The span at 165-211 (SQSNESRGTRSSIFFPSTSNSRRGSATSTMTSGSRSSHPPDTPPITS) shows a compositional bias: polar residues. Residues 212–221 (QQQEQQYDQQ) are compositionally biased toward low complexity. The span at 222–233 (RQQRPETREQEQ) shows a compositional bias: basic and acidic residues. The segment covering 332–355 (KRKAKHHHHYHHPQHPRPPHRKHY) has biased composition (basic residues). Positions 361–376 (PIEDKAVVEKEQEPPE) are enriched in basic and acidic residues. Residues 407-428 (SASTQSVSSFSSGATGASGATG) show a composition bias toward low complexity. The Ras-associating domain maps to 494-574 (RRYAIRIFNI…LNGYLKSDPL (81 aa)). LRR repeat units lie at residues 632-655 (TSDI…FIES), 659-679 (LSSL…VTDA), 681-702 (KLVS…IFKL), 704-726 (NLTI…SKLK), 727-748 (NLQL…INSC), 750-771 (NLLQ…INQL), 773-794 (KLAK…SQMK), 795-816 (NLRT…APNL), 817-834 (QNLF…DDLT), 835-856 (RLRT…GNYM), 858-879 (NMTS…LLSK), 882-903 (RLEK…INKL), 905-926 (RLIY…ISDL), 928-950 (SLKS…EDLE), 951-971 (LTSL…PAKF), 982-1004 (SLLF…VNTF), 1006-1027 (NLKT…KLQN), 1028-1048 (LTEL…AVQH), 1051-1073 (SLKV…SQLS), 1074-1096 (RLSV…HYDW), 1103-1124 (DLKY…LDPE), and 1135-1160 (LKQL…SVSI). The PPM-type phosphatase domain maps to 1173-1439 (RYGVADTLGQ…DNITILCVSL (267 aa)). The 138-residue stretch at 1483–1620 (AIVFTDIKNS…PVVNKAARVS (138 aa)) folds into the Guanylate cyclase domain. Mg(2+) is bound by residues Asp-1488 and Asp-1531.

This sequence belongs to the adenylyl cyclase class-3 family. Requires Mg(2+) as cofactor.

The catalysed reaction is ATP = 3',5'-cyclic AMP + diphosphate. Functionally, plays essential roles in regulation of cellular metabolism by catalyzing the synthesis of a second messenger, cAMP. The protein is Adenylate cyclase (CYR1) of Lachancea kluyveri (Yeast).